The primary structure comprises 211 residues: Dual specificity protein phosphatase 26 (211 aa).

The Tyrosine-protein phosphatase domain maps to 60-207 (NHADEVWPGL…LLALDRRLRQ (148 aa)). The Phosphocysteine intermediate role is filled by Cys152.

The protein belongs to the protein-tyrosine phosphatase family. Non-receptor class dual specificity subfamily. Interacts with HSF4.

Its subcellular location is the cytoplasm. It is found in the nucleus. The protein localises to the golgi apparatus. The catalysed reaction is O-phospho-L-tyrosyl-[protein] + H2O = L-tyrosyl-[protein] + phosphate. It carries out the reaction O-phospho-L-seryl-[protein] + H2O = L-seryl-[protein] + phosphate. The enzyme catalyses O-phospho-L-threonyl-[protein] + H2O = L-threonyl-[protein] + phosphate. Its function is as follows. Inactivates MAPK1 and MAPK3 which leads to dephosphorylation of heat shock factor protein 4 and a reduction in its DNA-binding activity. This Pongo abelii (Sumatran orangutan) protein is Dual specificity protein phosphatase 26 (DUSP26).